Reading from the N-terminus, the 1996-residue chain is Non-reducing polyketide synthase atnG (1996 aa).

Residues 9 to 245 (FLFGDQADAP…AELPAFGAVH (237 aa)) form an N-terminal acylcarrier protein transacylase (SAT) domain region. One can recognise a Ketosynthase family 3 (KS3) domain in the interval 366-794 (SGSVAVIGMS…GGNSCFVLEE (429 aa)). Residues cysteine 538, histidine 673, and histidine 713 each act as for beta-ketoacyl synthase activity in the active site. The interval 891–1150 (AFAFTGQGAH…VKYTQAISHC (260 aa)) is malonyl-CoA:ACP transacylase (MAT) domain. The active-site For acyl/malonyl transferase activity is the serine 982. Residues 1263 to 1392 (HHLVSQDDNG…CCIRQTDEQD (130 aa)) form an N-terminal hotdog fold region. The PKS/mFAS DH domain occupies 1263-1569 (HHLVSQDDNG…FRKMPRTTLH (307 aa)). The product template (PT) domain stretch occupies residues 1267-1568 (SQDDNGKEQS…RFRKMPRTTL (302 aa)). Catalysis depends on histidine 1295, which acts as the Proton acceptor; for dehydratase activity. The C-terminal hotdog fold stretch occupies residues 1416 to 1569 (ASGIANRFQG…FRKMPRTTLH (154 aa)). Aspartate 1481 (proton donor; for dehydratase activity) is an active-site residue. Positions 1573–1621 (GKAVPPKPAKETSHPSVEATAPATTNGRSSATNAQAEAPAPPVNGSNGH) are disordered. Residues 1594 to 1607 (PATTNGRSSATNAQ) are compositionally biased toward polar residues. The region spanning 1620–1697 (GHRKTVESVL…DAQRQLRTLE (78 aa)) is the Carrier domain. At serine 1657 the chain carries O-(pantetheine 4'-phosphoryl)serine. Residues 1725-1923 (KRECNVVLMQ…ERTFVVWAKK (199 aa)) form a thioesterase (TE) domain region.

It functions in the pathway secondary metabolite biosynthesis; terpenoid biosynthesis. In terms of biological role, non-reducing polyketide synthase; part of the gene cluster that mediates the biosynthesis of the meroterpenoids arthripenoids. The pathway begins with the HR-PKS atnH that catalyzes two chain-extension steps to form a reduced triketide, which then primes the SAT domain in the NR-PKS atnG to initiate three more cycles of extension to give a linear hexaketide corresponding to the polyketide part of arthripenoids. The FAD-dependent monooxygenase atnJ then performs an oxidative decarboxylation at C11 of the atnH/atnG product, via an electrophilic aromatic hydroxylation with concomitant ipso-decarboxylation. The membrane-bound polyprenyl transferase atnF then introduces a farnesyl group before the FAD-dependent monooxygenase atnK functions as the first epoxidase on terminal C12'-C13' olefin, followed by a second epoxidation on C7'-C8' catalyzed by atnA. The terpene cyclase/mutase atnI then initiates the sequential tricyclic ring formation through protonation of the terminal epoxide and catalyzes the regioselective and stereoselective 6/6/6-tricyclic ring formation. The cytochrome P450 monooxygenase atnM is responsible for hydroxylating both C1' and C10'. The next steps may involve ketoreduction and acetyl transfer by the ketoreductase atnB and the acetyltransferase atnC, and lead to the production of arthripenoid B, the final biosynthetic product of the atn cluster. The hydroquinone moiety in arthripenoid B is prone to undergo spontaneous oxidation to afford a benzoquinone compound, a key intermediate for generating structure diversity. For instance, addition of a cysteine followed by ring contraction gives arthripenoid A, tautomerization gives the main product arthripenoid C, addition of a molecular of water or amine affords arthripenoid D or E, respectively, and loss of one water forms arthripenoid F. This chain is Non-reducing polyketide synthase atnG, found in Arthrinium sp.